Reading from the N-terminus, the 492-residue chain is MLIDSLHISFDSFNFESILPMLVLVCGGIFTLLINAFTSRFSRNLNMFLCMLFLVLDFLVVLGLEQQENAFFGFLSLDTLSLVSQSIVLISAFLLIFLALSKERFNEFQTAEFYPLYLFIIAGFQFMVSSNHLLLMLIGLETASLPICVLMALSGKRYGLEAGIKYFTMGAMASAFFAMGAMAFYLLTGSLNLEVITLYLYTEGVTNPMLFAMGVIFLIGAIGFKVSLVPFHTWMPDVYEGNNPVFASYISIVPKIAGFVVATRLFGAFIDTRIAWVEDIFYALILITITIPNLIALWQEDVKRMLAYSSISHSGFALACVFIHTEESQKAMFVYWFMFAFTYIGAFGLLWLLKSREKTWDERYDHPYSKFDGLIKTHPLVAILGAIFVFGLAGIPPFSVFWGKFLAVESALESNHILLAAVMLANSAVAVFYYFRWLVAMFFNKPLQTQSYAESDIYTQNATMPIYAVIIAMALVCLFSVFMMRGLLEFVA.

The next 14 membrane-spanning stretches (helical) occupy residues 18–38 (ILPMLVLVCGGIFTLLINAFT), 45–65 (LNMFLCMLFLVLDFLVVLGLE), 80–100 (LSLVSQSIVLISAFLLIFLAL), 108–128 (FQTAEFYPLYLFIIAGFQFMV), 133–153 (LLLMLIGLETASLPICVLMAL), 167–187 (FTMGAMASAFFAMGAMAFYLL), 209–229 (MLFAMGVIFLIGAIGFKVSLV), 250–270 (ISIVPKIAGFVVATRLFGAFI), 277–297 (VEDIFYALILITITIPNLIAL), 305–325 (MLAYSSISHSGFALACVFIHT), 333–353 (FVYWFMFAFTYIGAFGLLWLL), 381–401 (VAILGAIFVFGLAGIPPFSVF), 415–435 (NHILLAAVMLANSAVAVFYYF), and 464–484 (MPIYAVIIAMALVCLFSVFMM).

The protein belongs to the complex I subunit 2 family. NDH-1 is composed of 14 different subunits. Subunits NuoA, H, J, K, L, M, N constitute the membrane sector of the complex.

It is found in the cell inner membrane. The catalysed reaction is a quinone + NADH + 5 H(+)(in) = a quinol + NAD(+) + 4 H(+)(out). In terms of biological role, NDH-1 shuttles electrons from NADH, via FMN and iron-sulfur (Fe-S) centers, to quinones in the respiratory chain. The immediate electron acceptor for the enzyme in this species is believed to be ubiquinone. Couples the redox reaction to proton translocation (for every two electrons transferred, four hydrogen ions are translocated across the cytoplasmic membrane), and thus conserves the redox energy in a proton gradient. The sequence is that of NADH-quinone oxidoreductase subunit N from Helicobacter acinonychis (strain Sheeba).